The sequence spans 326 residues: tRNA-modifying protein YgfZ (326 aa).

The folate site is built by W27 and W189.

This sequence belongs to the tRNA-modifying YgfZ family.

It is found in the cytoplasm. In terms of biological role, folate-binding protein involved in regulating the level of ATP-DnaA and in the modification of some tRNAs. It is probably a key factor in regulatory networks that act via tRNA modification, such as initiation of chromosomal replication. The polypeptide is tRNA-modifying protein YgfZ (Escherichia coli O7:K1 (strain IAI39 / ExPEC)).